The primary structure comprises 504 residues: 5-epiaristolochene 1,3-dihydroxylase (504 aa).

A helical membrane pass occupies residues 2–22; sequence QFFSLVSIFLFLSFLFLLRKW. Position 442 (Cys-442) interacts with heme.

It belongs to the cytochrome P450 family. The cofactor is heme.

It localises to the membrane. The catalysed reaction is (+)-5-epi-aristolochene + 2 reduced [NADPH--hemoprotein reductase] + 2 O2 = capsidiol + 2 oxidized [NADPH--hemoprotein reductase] + 2 H2O + 2 H(+). With respect to regulation, inhibited by ancymidol and ketoconazole. Involved in the biosynthesis of capsidiol. Catalyzes the successive and independent hydroxylations at the C1 and C3 positions of 5-epiaristolochene. The second hydroxylation step is 8-fold more efficient than the first hydroxylation reaction. Capable of utilizing premnaspirodiene as a substrate. This chain is 5-epiaristolochene 1,3-dihydroxylase (CYP71D20), found in Nicotiana tabacum (Common tobacco).